The following is a 32-amino-acid chain: Ranatuerin-3 (32 aa).

The cysteines at positions 23 and 28 are disulfide-linked.

This sequence belongs to the frog skin active peptide (FSAP) family. Ranatuerin subfamily. As to expression, expressed by the skin glands.

It localises to the secreted. Its function is as follows. Antibacterial activity against Gram-positive bacterium S.aureus (MIC=60 uM). Shows no detectable hemolytic activity towards human erythrocytes. In Aquarana catesbeiana (American bullfrog), this protein is Ranatuerin-3.